A 509-amino-acid chain; its full sequence is Sulfoacetate--CoA ligase (509 aa).

The disordered stretch occupies residues 320 to 340 (AFSNPLDPGQRRIGSIGRPSG).

This sequence belongs to the ATP-dependent AMP-binding enzyme family.

The protein resides in the cytoplasm. It carries out the reaction sulfoacetate + ATP + CoA = sulfoacetyl-CoA + AMP + diphosphate. Its function is as follows. Involved in the degradation of sulfoacetate, a widespread natural product. Catalyzes the CoA- and ATP-dependent conversion of sulfoacetate to sulfoacetyl-CoA and AMP. In Cupriavidus necator (strain ATCC 17699 / DSM 428 / KCTC 22496 / NCIMB 10442 / H16 / Stanier 337) (Ralstonia eutropha), this protein is Sulfoacetate--CoA ligase.